Reading from the N-terminus, the 1331-residue chain is uncharacterized protein (1331 aa).

Transmembrane regions (helical) follow at residues 373 to 393 (VIGVGISPDFVYPVFSASLIV), 487 to 507 (ALFLTIAILTVAIIVSILILI), 534 to 554 (LLIFGLIPAIVGAISGYSFGI), 579 to 599 (VVGLLFFSLFVILIMSSISLL), 653 to 673 (LVFLTLMSSFTMMILNLSFAT), 1206 to 1226 (VIAVIIPIIMLIILLVSTTLI), 1255 to 1275 (IPLFAFGLLISIPFSIYLIAL), and 1297 to 1317 (AIGSMLVLLAVLSITFVLNWL).

It belongs to the ABC-4 integral membrane protein family.

The protein resides in the cell membrane. This is an uncharacterized protein from Mycoplasma genitalium (strain ATCC 33530 / DSM 19775 / NCTC 10195 / G37) (Mycoplasmoides genitalium).